We begin with the raw amino-acid sequence, 119 residues long: Autophagy-related protein 8A (119 aa).

The Phosphatidylethanolamine amidated glycine moiety is linked to residue G117. A propeptide spans S118–A119 (removed in mature form).

This sequence belongs to the ATG8 family. In terms of assembly, interacts with ATG4. In terms of processing, the C-terminal 2 residues are removed by ATG4 to expose Gly-117 at the C-terminus. The C-terminal Gly is then amidated with phosphatidylethanolamine by an activating system similar to that for ubiquitin. As to expression, constitutively expressed.

It localises to the cytoplasmic vesicle. It is found in the autophagosome membrane. The protein resides in the vacuole membrane. Its subcellular location is the cytoplasm. The protein localises to the cytoskeleton. Its function is as follows. Ubiquitin-like modifier involved in cytoplasm to vacuole transport (Cvt) vesicles and autophagosomes formation. May mediate the delivery of the vesicles and autophagosomes to the vacuole via the microtubule cytoskeleton. Ubiquitin-like modifier involved in autophagosomes formation. May mediate the delivery of the autophagosomes to the vacuole via the microtubule cytoskeleton. The protein is Autophagy-related protein 8A (ATG8A) of Oryza sativa subsp. indica (Rice).